Reading from the N-terminus, the 463-residue chain is Argininosuccinate lyase (463 aa).

The protein belongs to the lyase 1 family. Argininosuccinate lyase subfamily.

The protein localises to the cytoplasm. The catalysed reaction is 2-(N(omega)-L-arginino)succinate = fumarate + L-arginine. It functions in the pathway amino-acid biosynthesis; L-arginine biosynthesis; L-arginine from L-ornithine and carbamoyl phosphate: step 3/3. This Chlorobaculum parvum (strain DSM 263 / NCIMB 8327) (Chlorobium vibrioforme subsp. thiosulfatophilum) protein is Argininosuccinate lyase.